Consider the following 437-residue polypeptide: Lipopolysaccharide biosynthesis protein RfbH (437 aa).

This sequence belongs to the DegT/DnrJ/EryC1 family. It depends on pyridoxal 5'-phosphate as a cofactor.

The protein operates within bacterial outer membrane biogenesis; LPS O-antigen biosynthesis. The polypeptide is Lipopolysaccharide biosynthesis protein RfbH (rfbH) (Salmonella typhimurium (strain LT2 / SGSC1412 / ATCC 700720)).